The sequence spans 162 residues: Selenoprotein F (162 aa).

Positions 1–28 (MAAGQGGWLRPALGLRLLLATAFQAVSA) are cleaved as a signal peptide. Residue selenocysteine 93 is a non-standard amino acid, selenocysteine.

The protein belongs to the selenoprotein M/F family. In terms of assembly, forms a tight complex with UGGT1/UGCGL1. Interacts with UGGT2/UGCGL2. Interacts with RDH11.

The protein resides in the endoplasmic reticulum lumen. May be involved in redox reactions associated with the formation of disulfide bonds. May contribute to the quality control of protein folding in the endoplasmic reticulum. May regulate protein folding by enhancing the catalytic activity of UGGT1/UGCGL1 and UGGT2/UGCGL2. This chain is Selenoprotein F, found in Mus musculus (Mouse).